The primary structure comprises 145 residues: Protein SprT-like (145 aa).

The SprT-like domain occupies Thr4–Met140. His64 provides a ligand contact to Zn(2+). Glu65 is an active-site residue. His68 serves as a coordination point for Zn(2+).

It belongs to the SprT family. The cofactor is Zn(2+).

It localises to the cytoplasm. The polypeptide is Protein SprT-like (Streptococcus pyogenes serotype M1).